The following is a 1216-amino-acid chain: MAGAQPGVHALQLKPVCVSDSLKKGTKFVKWEDDSTVVTPIILRTDPQGFFFYWTDQNKETELLDLSLVKDARCGKHAKAPKDPKLRELLDVGNIGRLEHRMITVVYGPDLVNISHLNLVAFQEEVAKEWTNEVFSLATNLLAQNMSRDAFLEKAYTKLKLQVTPEGRIPLKNIYRLFSADRKRVETALEACSLPSSRNDSIPQEDFTPEVYRVFLNNLCPRPEIDNIFSEFGAKSKPYLTVDQMMDFINLKQRDPRLNEILYPPLKQEQVQVLIEKYEPNNSLAKKGQISVDGFMRYLSGEENGVVSPEKLDLNEDMSQPLSHYFINSSHNTYLTAGQLAGNSSVEMYRQVLLSGCRCVELDCWKGRTAEEEPVITHGFTMTTEISFKEVIEAIAECAFKTSPFPILLSFENHVDSPKQQAKMAEYCRLIFGDALLMEPLDKYPLESGVPLPSPMDLMYKILVKNKKKSHKSSEGSGKKKLSEQASNTYSDSSSVFEPSSPGAGEADTESDDDDDDDDCKKSSMDEGTAGSEAMATEEMSNLVNYIQPVKFESFEISKKRNRSFEMSSFVETKGLEQLTKSPVEFVEYNKMQLSRIYPKGTRVDSSNYMPQLFWNAGCQMVALNFQTVDLAMQINMGMYEYNGKSGYRLKPEFMRRPDKHFDPFTEGIVDGIVANTLSVKIISGQFLSDKKVGTYVEVDMFGLPVDTRRKAFKTKTSQGNAVNPIWEEEPIVFKKVVLPSLACLRIAVYEEGGKFIGHRILPVQAIRPGYHYICLRNERNQPLMLPALFVYIEVKDYVPDTYADVIEALSNPIRYVNLMEQRAKQLAALTLEDEEEVKKEADPGETPSEAPSEARPTPAENGVNHTTSLTPKPPSQALHSQPAPGSVKAPAKTEDLIQSVLTEVEAQTIEELKQQKSFVKLQKKHYKEMKDLVKRHHKKTTDLIKEHTTKYNEIQNDYLRRRAALEKTAKKDNKKKSEPSSPDHVSSTIEQDLAALDAEMTQKLVDLKDKQQQQLLNLRQEQYYSEKYQKREHIKLLIQKLTDVAEECQNNQLKKLKEICEKEKKELKKKMDKKRQEKITEAKSKDKSQMEEEKTEMIRSYIQEVVQYIKRLEEAQSKRQEKLVEKHKEIRQQILDEKPKLQVELEQEYQDKFKRLPLEILEFVQEAMKGKISEDSNHSSAPPLMTSDSGKLNQKPPSSEELEGENPGKEFDTPL.

C17 is lipidated: S-palmitoyl cysteine. Residue S236 is modified to Phosphoserine. One can recognise a PI-PLC X-box domain in the interval 316-467; that stretch reads EDMSQPLSHY…LMYKILVKNK (152 aa). Catalysis depends on residues H331 and H378. S417 bears the Phosphoserine mark. Residues 469 to 534 are disordered; that stretch reads KSHKSSEGSG…MDEGTAGSEA (66 aa). A compositionally biased stretch (basic and acidic residues) spans 472–483; the sequence is KSSEGSGKKKLS. The span at 491 to 501 shows a compositional bias: low complexity; sequence SDSSSVFEPSS. Residues 507-518 show a composition bias toward acidic residues; sequence ADTESDDDDDDD. T509 carries the post-translational modification Phosphothreonine. 2 positions are modified to phosphoserine: S511 and S582. One can recognise a PI-PLC Y-box domain in the interval 540 to 656; the sequence is MSNLVNYIQP…GYRLKPEFMR (117 aa). Residues 656 to 784 enclose the C2 domain; it reads RRPDKHFDPF…CLRNERNQPL (129 aa). Disordered stretches follow at residues 834–891, 933–993, 1071–1095, and 1172–1216; these read DEEE…VKAP, LVKR…IEQD, KMDKKRQEKITEAKSKDKSQMEEEK, and KISE…DTPL. S887 carries the post-translational modification Phosphoserine; by PKC. 2 stretches are compositionally biased toward basic and acidic residues: residues 941-951 and 959-979; these read TTDLIKEHTTK and YLRRRAALEKTAKKDNKKKSE. Residues S978 and S987 each carry the phosphoserine modification. Residues 980-991 are compositionally biased toward polar residues; sequence PSSPDHVSSTIE. Residues 1075–1095 are compositionally biased toward basic and acidic residues; it reads KRQEKITEAKSKDKSQMEEEK. Residues 1187–1198 are compositionally biased toward polar residues; the sequence is TSDSGKLNQKPP. Phosphoserine is present on residues S1199 and S1200. The segment covering 1207–1216 has biased composition (basic and acidic residues); that stretch reads NPGKEFDTPL.

In terms of assembly, interacts with DGKQ. The cofactor is Ca(2+). In terms of processing, palmitoylated. Palmitoylation at Cys-17 by ZDHHC21 regulates the signaling activity of PLCB1 and the function of the endothelial barrier. Palmitoylation by ZDHHC21 is stimulated by inflammation.

The protein resides in the nucleus membrane. Its subcellular location is the cytoplasm. The enzyme catalyses a 1,2-diacyl-sn-glycero-3-phospho-(1D-myo-inositol-4,5-bisphosphate) + H2O = 1D-myo-inositol 1,4,5-trisphosphate + a 1,2-diacyl-sn-glycerol + H(+). It catalyses the reaction a 1,2-diacyl-sn-glycero-3-phospho-(1D-myo-inositol) + H2O = 1D-myo-inositol 1-phosphate + a 1,2-diacyl-sn-glycerol + H(+). Catalyzes the hydrolysis of 1-phosphatidylinositol 4,5-bisphosphate into diacylglycerol (DAG) and inositol 1,4,5-trisphosphate (IP3) and mediates intracellular signaling downstream of G protein-coupled receptors. Regulates the function of the endothelial barrier. In Bos taurus (Bovine), this protein is 1-phosphatidylinositol 4,5-bisphosphate phosphodiesterase beta-1 (PLCB1).